The following is a 660-amino-acid chain: Peroxisomal acyl-coenzyme A oxidase 1 (660 aa).

Position 26 is a phosphoserine (S26). N6-succinyllysine is present on residues K89 and K90. Residues T139 and G178 each coordinate FAD. K216 is subject to N6-acetyllysine. N6-succinyllysine is present on K241. Residues K255, K267, and K272 each carry the N6-acetyllysine modification. An N6-succinyllysine modification is found at K349. E421 serves as the catalytic Proton acceptor. N6-acetyllysine; alternate occurs at positions 437 and 446. Residues K437 and K446 each carry the N6-succinyllysine; alternate modification. K500 and K504 each carry N6-acetyllysine. K512 is subject to N6-acetyllysine; alternate. K512 bears the N6-succinyllysine; alternate mark. K542 bears the N6-succinyllysine mark. K637 is subject to N6-acetyllysine; alternate. The residue at position 637 (K637) is an N6-succinyllysine; alternate. Position 643 is an N6-succinyllysine (K643). S649 bears the Phosphoserine mark. The residue at position 651 (K651) is an N6-acetyllysine. An N6-succinyllysine modification is found at K654. The Microbody targeting signal signature appears at 658–660 (SKL).

The protein belongs to the acyl-CoA oxidase family. Homodimer. Interacts with LONP2. Requires FAD as cofactor. As to expression, widely expressed with highest levels of isoform 1 and isoform 2 detected in testis. Isoform 1 is expressed at higher levels than isoform 2 in liver and kidney while isoform 2 levels are higher in brain, lung, muscle, white adipose tissue and testis. Levels are almost equal in heart.

The protein resides in the peroxisome. It carries out the reaction a 2,3-saturated acyl-CoA + O2 = a (2E)-enoyl-CoA + H2O2. The catalysed reaction is hexadecanoyl-CoA + O2 = (2E)-hexadecenoyl-CoA + H2O2. The enzyme catalyses dodecanoyl-CoA + O2 = (2E)-dodecenoyl-CoA + H2O2. It catalyses the reaction octanoyl-CoA + O2 = (2E)-octenoyl-CoA + H2O2. It carries out the reaction decanoyl-CoA + O2 = (2E)-decenoyl-CoA + H2O2. The catalysed reaction is tetradecanoyl-CoA + O2 = (2E)-tetradecenoyl-CoA + H2O2. The enzyme catalyses hexadecanedioyl-CoA + O2 = (2E)-hexadecenedioyl-CoA + H2O2. It catalyses the reaction (5Z,8Z,11Z,14Z,17Z)-eicosapentaenoyl-CoA + O2 = (2E,5Z,8Z,11Z,14Z,17Z)-icosahexaenoyl-CoA + H2O2. It carries out the reaction tetracosanoyl-CoA + O2 = (2E)-tetracosenoyl-CoA + H2O2. The catalysed reaction is glutaryl-CoA + O2 = (2E)-glutaconyl-CoA + H2O2. The enzyme catalyses hexanoyl-CoA + O2 = (2E)-hexenoyl-CoA + H2O2. It catalyses the reaction octadecanoyl-CoA + O2 = (2E)-octadecenoyl-CoA + H2O2. It carries out the reaction (6Z,9Z,12Z,15Z,18Z,21Z)-tetracosahexaenoyl-CoA + O2 = (2E,6Z,9Z,12Z,15Z,18Z,21Z)-tetracosaheptaenoyl-CoA + H2O2. It functions in the pathway lipid metabolism; peroxisomal fatty acid beta-oxidation. In terms of biological role, involved in the initial and rate-limiting step of peroxisomal beta-oxidation of straight-chain saturated and unsaturated very-long-chain fatty acids. Catalyzes the desaturation of fatty acyl-CoAs such as palmitoyl-CoA (hexadecanoyl-CoA) to 2-trans-enoyl-CoAs ((2E)-enoyl-CoAs) such as (2E)-hexadecenoyl-CoA, and donates electrons directly to molecular oxygen (O(2)), thereby producing hydrogen peroxide (H(2)O(2)). Shows highest activity against medium-chain fatty acyl-CoAs. Shows optimum activity with a chain length of 10 carbons (decanoyl-CoA) in vitro. Its function is as follows. Is active against a much broader range of substrates and shows activity towards long-chain fatty acyl-CoAs. The sequence is that of Peroxisomal acyl-coenzyme A oxidase 1 from Homo sapiens (Human).